The sequence spans 870 residues: MVKEKKKADKKGEKSARSPSSLSDNLDFSKQDGNTTRQEMSPAGVPLLGMQLNEVKPKKDRQNVQQNEDASQYEESILTKLIVESYEGEKVRGLYEGEGFAAFQGGCTYRGMFSEGLMHGQGTYIWADGLKYEGDFVKNVPMNHGVYTWPDGSMYEGEVVNGMRNGFGMFKCSTQPVSYIGHWCNGKRHGKGSIYYNQEGTCWYEGDWVQNIKKGWGIRCYKSGNIYEGQWEDNMRHGEGRMRWLTTNEEYTGRWERGIQNGFGTHTWFLKRIRSSQYPLRNEYIGEFVNGYRHGRGKFYYASGAMYDGEWVSNKKHGMGRLTFKNGRVYEGAFSNDHIAGFPDLEVEFISCLDLSSGVAPRLSRSAELIRKLDGSESHSVLGSSIELDLNLLLDMYPETVQPEEKKQVEYAVLRNITELRRIYSFYSSLGCGHSLDNTFLMTKLHFWRFLKDCKFHHHKLTLADMDRILSANNDIPVEEIHSPFTTILLRTFLNYLLHLAYHIYHEEFQKRSPSLFLCFTKLMTENIRPNACQIKGNLFREQQRTLYSMSYMNKCWEIYLAYCRPSAAPPHEPTMKMRHFLWMLKDFKMINKELTAATFMEVIAEDNRFIYDGIDSNFEPELVFLEFFEALLSFAFICVTDQMTKSYTNVPADDVSGNKHETIYTILNQDAQNKSPSAVMSHESDAAHSDSARSSSSKLELSPDVNKIRKSEPKIKKSVSHERVSKMNFKLTGKGITFFSSESKKYERPKDDREEEFNTWVNNTYVFFVNTLFHAYKREEAIKEKIRADRLRSTAQAQQRKMEDDELEARLNIFILREEEAKRHDYEVDITVLKEPADVSSSHLILDPPKEDVTVSPSSKTITSKKKKK.

A compositionally biased stretch (basic and acidic residues) spans 1–16 (MVKEKKKADKKGEKSA). The tract at residues 1 to 44 (MVKEKKKADKKGEKSARSPSSLSDNLDFSKQDGNTTRQEMSPAG) is disordered. Polar residues predominate over residues 17-39 (RSPSSLSDNLDFSKQDGNTTRQE). MORN repeat units follow at residues 86–108 (YEGE…GGCT), 109–131 (YRGM…DGLK), 132–154 (YEGD…DGSM), 155–177 (YEGE…TQPV), 179–201 (YIGH…QEGT), 204–226 (YEGD…SGNI), 227–249 (YEGQ…TTNE), 251–273 (YTGR…LKRI), 284–306 (YIGE…SGAM), and 307–329 (YDGE…NGRV). The interval 674–704 (NKSPSAVMSHESDAAHSDSARSSSSKLELSP) is disordered. The span at 683-692 (HESDAAHSDS) shows a compositional bias: basic and acidic residues. Residues 693 to 703 (ARSSSSKLELS) are compositionally biased toward low complexity. Residues 784 to 811 (KEKIRADRLRSTAQAQQRKMEDDELEAR) adopt a coiled-coil conformation. The tract at residues 840–870 (VSSSHLILDPPKEDVTVSPSSKTITSKKKKK) is disordered.

In terms of assembly, interacts with RSPH6A. Does not appear to be part of the axonemal radial spoke complexes 1 or 2.

It localises to the cytoplasm. Its subcellular location is the cytoskeleton. The protein resides in the cilium axoneme. It is found in the cell projection. The protein localises to the cilium. It localises to the flagellum. May function as part of the axonemal radial spoke complex 3 (RS3). Radial spoke complexes are important for ciliary motility. The protein is Radial spoke head 10 homolog B2 (RSPH10B2) of Homo sapiens (Human).